The chain runs to 282 residues: Bifunctional protein FolD (282 aa).

NADP(+)-binding positions include 164–166 and Ser189; that span reads GRS.

It belongs to the tetrahydrofolate dehydrogenase/cyclohydrolase family. In terms of assembly, homodimer.

The enzyme catalyses (6R)-5,10-methylene-5,6,7,8-tetrahydrofolate + NADP(+) = (6R)-5,10-methenyltetrahydrofolate + NADPH. The catalysed reaction is (6R)-5,10-methenyltetrahydrofolate + H2O = (6R)-10-formyltetrahydrofolate + H(+). Its pathway is one-carbon metabolism; tetrahydrofolate interconversion. Its function is as follows. Catalyzes the oxidation of 5,10-methylenetetrahydrofolate to 5,10-methenyltetrahydrofolate and then the hydrolysis of 5,10-methenyltetrahydrofolate to 10-formyltetrahydrofolate. The polypeptide is Bifunctional protein FolD (Streptococcus suis (strain 05ZYH33)).